The following is a 254-amino-acid chain: MLPFGLVAALLLAAGPRPSLGDEAIHCPPCSEEKLARCRPPVGCEELVREPGCGCCATCALGLGMPCGVYTPRCGSGMRCYPPRGVEKPLRTLMHGQGVCTELSEIEAIQESLQTSDKDESEHPNNSFNPCSAHDHRCLQKHMAKIRDRSKMKIVGTPREEPRPVPQGSCQSELHRALERLAASQSRTHEDLFIIPIPNCDRNGNFHPKQCHPALDGQRGKCWCVDRKTGVKLPGGLEPKGELDCHQLADSFQE.

Residues 1–21 (MLPFGLVAALLLAAGPRPSLG) form the signal peptide. The IGFBP N-terminal domain maps to 23–103 (EAIHCPPCSE…MHGQGVCTEL (81 aa)). 6 disulfide bridges follow: C27/C53, C30/C55, C38/C56, C44/C59, C67/C80, and C74/C100. The N-linked (GlcNAc...) asparagine glycan is linked to N125. 4 disulfides stabilise this stretch: C131–C138, C170–C200, C211–C222, and C224–C245. Positions 167–245 (QGSCQSELHR…GLEPKGELDC (79 aa)) constitute a Thyroglobulin type-1 domain. Phosphoserine is present on S251.

As to quaternary structure, binds IGF2 more than IGF1.

Its subcellular location is the secreted. IGF-binding proteins prolong the half-life of the IGFs and have been shown to either inhibit or stimulate the growth promoting effects of the IGFs on cell culture. They alter the interaction of IGFs with their cell surface receptors. In Mus musculus (Mouse), this protein is Insulin-like growth factor-binding protein 4 (Igfbp4).